We begin with the raw amino-acid sequence, 56 residues long: Large ribosomal subunit protein bL33 (56 aa).

The protein belongs to the bacterial ribosomal protein bL33 family.

The protein is Large ribosomal subunit protein bL33 of Dichelobacter nodosus (strain VCS1703A).